Reading from the N-terminus, the 53-residue chain is Large ribosomal subunit protein bL33 (53 aa).

It belongs to the bacterial ribosomal protein bL33 family.

The protein is Large ribosomal subunit protein bL33 of Blochmanniella floridana.